A 254-amino-acid chain; its full sequence is 4-hydroxy-tetrahydrodipicolinate reductase (254 aa).

7–12 provides a ligand contact to NAD(+); the sequence is GASGRI. Arg35 serves as a coordination point for NADP(+). NAD(+) is bound by residues 91 to 93 and 115 to 118; these read GTT and AHNM. Catalysis depends on His147, which acts as the Proton donor/acceptor. His148 is a binding site for (S)-2,3,4,5-tetrahydrodipicolinate. The active-site Proton donor is the Lys151. 157–158 is a (S)-2,3,4,5-tetrahydrodipicolinate binding site; the sequence is GT.

The protein belongs to the DapB family.

It is found in the cytoplasm. The enzyme catalyses (S)-2,3,4,5-tetrahydrodipicolinate + NAD(+) + H2O = (2S,4S)-4-hydroxy-2,3,4,5-tetrahydrodipicolinate + NADH + H(+). It carries out the reaction (S)-2,3,4,5-tetrahydrodipicolinate + NADP(+) + H2O = (2S,4S)-4-hydroxy-2,3,4,5-tetrahydrodipicolinate + NADPH + H(+). It functions in the pathway amino-acid biosynthesis; L-lysine biosynthesis via DAP pathway; (S)-tetrahydrodipicolinate from L-aspartate: step 4/4. Functionally, catalyzes the conversion of 4-hydroxy-tetrahydrodipicolinate (HTPA) to tetrahydrodipicolinate. In Helicobacter acinonychis (strain Sheeba), this protein is 4-hydroxy-tetrahydrodipicolinate reductase.